Consider the following 389-residue polypeptide: Na(+)/H(+) antiporter NhaA 1 (389 aa).

Transmembrane regions (helical) follow at residues 12-32 (VLNEAFGGVLLIVCTLLALLV), 62-82 (FLLWINDGLISIFFFAIGLEL), 97-117 (IVLPFMAALGGILIPAMLFVL), 128-148 (GWAIPTATDTAFALAILMMCG), 157-177 (IFLLSLAIFDDVGAILIIAIF), 184-204 (IVAFVVAGIAILAMLVLNILG), 220-240 (ISVLKSGVHATLAGIITAFFI), 260-280 (FWLAFVILPLFAFANAGVNLS), 282-302 (IDIGAIFSGVSVGIFLGLFVG), 305-325 (AGVFLFSYLAIRFKFAALPQG), 331-351 (LYGVCILTGIGFTMSLFIDGL), and 365-385 (LAILIASFCSGIWGFIYLKFF).

This sequence belongs to the NhaA Na(+)/H(+) (TC 2.A.33) antiporter family.

It is found in the cell inner membrane. The enzyme catalyses Na(+)(in) + 2 H(+)(out) = Na(+)(out) + 2 H(+)(in). Its function is as follows. Na(+)/H(+) antiporter that extrudes sodium in exchange for external protons. The protein is Na(+)/H(+) antiporter NhaA 1 of Campylobacter jejuni subsp. jejuni serotype O:23/36 (strain 81-176).